The chain runs to 786 residues: Endonuclease MutS2 (786 aa).

Glycine 332–threonine 339 contributes to the ATP binding site. One can recognise a Smr domain in the interval isoleucine 711 to lysine 786.

This sequence belongs to the DNA mismatch repair MutS family. MutS2 subfamily. As to quaternary structure, homodimer. Binds to stalled ribosomes, contacting rRNA.

Endonuclease that is involved in the suppression of homologous recombination and thus may have a key role in the control of bacterial genetic diversity. Its function is as follows. Acts as a ribosome collision sensor, splitting the ribosome into its 2 subunits. Detects stalled/collided 70S ribosomes which it binds and splits by an ATP-hydrolysis driven conformational change. Acts upstream of the ribosome quality control system (RQC), a ribosome-associated complex that mediates the extraction of incompletely synthesized nascent chains from stalled ribosomes and their subsequent degradation. Probably generates substrates for RQC. This chain is Endonuclease MutS2, found in Clostridium perfringens (strain 13 / Type A).